The following is a 389-amino-acid chain: MKHYSATLALLPLTLALFLPQAAHAHGSMETPPSRVYGCFLEGPENPKSAACKAAVAAGGTQALYDWNGVNQGNANGNHQAVVPDGQLCGAGKALFKGLNLARSDWPSTAIAPDASGNFQFVYKASAPHATRYFDFYITKDGYNPEKPLAWSDLEPAPFCSITSVKLENGTYRMNCPLPQGKTGKHVIYNVWQRSDSPEAFYACIDVSFSGAVANPWQALGNLRAQQDLPAGATVTLRLFDAQGRDAQRHSLTLAQGNNGAKQWPLALAQKVNQDSTLVNIGVLDAYGAVSPVASSQDNQVYVRQAGYRFQVDIELPVEGGGEQPGGDGKVDFDYPQGLQQYDAGTVVRGADGKRYQCKPYPNSGWCKGWDLYYAPGKGMAWQDAWTLL.

The signal sequence occupies residues 1-25 (MKHYSATLALLPLTLALFLPQAAHA). A Chitin-binding type-4 domain is found at 26–208 (HGSMETPPSR…EAFYACIDVS (183 aa)). Phosphotyrosine is present on tyrosine 37. A Phosphoserine modification is found at serine 210.

Its subcellular location is the secreted. Its function is as follows. Binds but does not hydrolyze chitin. This is Chitin-binding protein CbpD (cpbD) from Pseudomonas aeruginosa (strain UCBPP-PA14).